Here is a 277-residue protein sequence, read N- to C-terminus: Small ribosomal subunit protein uS3 (277 aa).

Residues 43–111 (IRELMSKGMD…QIQLNILEVK (69 aa)) enclose the KH type-2 domain. The segment at 217-277 (AAQQAAAPSS…AEANNAEGGK (61 aa)) is disordered. Basic and acidic residues predominate over residues 245 to 258 (NDRNDRGGRRERDS). The segment covering 259–277 (AAAPQQNSAAEANNAEGGK) has biased composition (low complexity).

The protein belongs to the universal ribosomal protein uS3 family. In terms of assembly, part of the 30S ribosomal subunit. Forms a tight complex with proteins S10 and S14.

Functionally, binds the lower part of the 30S subunit head. Binds mRNA in the 70S ribosome, positioning it for translation. The chain is Small ribosomal subunit protein uS3 from Kocuria rhizophila (strain ATCC 9341 / DSM 348 / NBRC 103217 / DC2201).